The sequence spans 130 residues: Large ribosomal subunit protein bL19 (130 aa).

It belongs to the bacterial ribosomal protein bL19 family.

This protein is located at the 30S-50S ribosomal subunit interface and may play a role in the structure and function of the aminoacyl-tRNA binding site. This is Large ribosomal subunit protein bL19 from Burkholderia lata (strain ATCC 17760 / DSM 23089 / LMG 22485 / NCIMB 9086 / R18194 / 383).